The primary structure comprises 706 residues: MSSRVLASRAAQPLKRHPTVVGAGDEAYPTPRRCFSSLHDRTVNQSADFSSTSKNYDRLGRRAKEKLLDREFFMSLLNSASTKREAKSYLARLKAQQPAKPQKKLQSTTVQQTIAESLPSGVNLGSFYGASRSVYQSPVFRQDSTPAPAREDIPERLHLALVKIKTPQLLDDSTLDGVARTLSQINRLGLACCVVVDPGSDGDTHTLRKIATEQVGRIATAVDRQPDSKSSHLYSVLSFPAKRPDIPTVSSRKQLLSPLRDGHILIVAPIAYTEDTPKALMVPANDAVLALTKELAGLATMPDPDEDPMITAQKINDLQKEVSLDRVILLDPLGGVPAFRGPQTSHAFINMDQEFEHIERELLQVRNPANNSQGESVVTNPISDSNAVSESASTEPTSTPAKQALLPMSVGEDTIDGHLDNLRLSQQTLAMLPSASSGIITSPVEVANSARSLESSPSELSVGTRRQRNPLIHNLLTDKPLLSSSLPLSRRARGSLHLPAPPTTFVKRGMPVSLIPDPRVQVWTAQTRPNMNLDDPHVDLPRLVHLIEDSFNRKLDVKDYLNRVNGRLAGLIIAGEYEGGAILTWELPPGVEDDGSESSTARMVPYLDKFAVLKRSQGAGGVADIVFNAMVRTCFPNGVCWRSRKDNPVNKWYFERSLGSWKLADTNWTMFWTTPDLPEKPQKFRDYEAVCRSIQPSWAEDTGVID.

2 disordered regions span residues 1–25 (MSSR…GAGD) and 367–403 (NPAN…PAKQ). The N-terminal 35 residues, 1–35 (MSSRVLASRAAQPLKRHPTVVGAGDEAYPTPRRCF), are a transit peptide targeting the mitochondrion. Residues 367 to 388 (NPANNSQGESVVTNPISDSNAV) are compositionally biased toward polar residues. Residues 389-401 (SESASTEPTSTPA) are compositionally biased toward low complexity. In terms of domain architecture, N-acetyltransferase spans 527–696 (TRPNMNLDDP…YEAVCRSIQP (170 aa)).

The protein belongs to the acetyltransferase family.

Its subcellular location is the mitochondrion. It catalyses the reaction L-glutamate + acetyl-CoA = N-acetyl-L-glutamate + CoA + H(+). It participates in amino-acid biosynthesis; L-arginine biosynthesis; N(2)-acetyl-L-ornithine from L-glutamate: step 1/4. N-acetylglutamate synthase involved in arginine biosynthesis. The polypeptide is Amino-acid acetyltransferase, mitochondrial (arg2) (Emericella nidulans (strain FGSC A4 / ATCC 38163 / CBS 112.46 / NRRL 194 / M139) (Aspergillus nidulans)).